A 369-amino-acid chain; its full sequence is Glutamate 5-kinase (369 aa).

An ATP-binding site is contributed by Lys9. Substrate is bound by residues Ser49, Asp136, and Asn148. Residues 168-169 and 210-216 contribute to the ATP site; these read TD and TGGMLTK. A PUA domain is found at 275-355; it reads RGSVYVDEGA…KGVFIHRDDW (81 aa).

This sequence belongs to the glutamate 5-kinase family.

It localises to the cytoplasm. The enzyme catalyses L-glutamate + ATP = L-glutamyl 5-phosphate + ADP. Its pathway is amino-acid biosynthesis; L-proline biosynthesis; L-glutamate 5-semialdehyde from L-glutamate: step 1/2. Its function is as follows. Catalyzes the transfer of a phosphate group to glutamate to form L-glutamate 5-phosphate. The sequence is that of Glutamate 5-kinase from Neisseria meningitidis serogroup B (strain ATCC BAA-335 / MC58).